The sequence spans 249 residues: Pyridoxine 5'-phosphate synthase (249 aa).

Asn-7 provides a ligand contact to 3-amino-2-oxopropyl phosphate. Residue 9-10 (DH) coordinates 1-deoxy-D-xylulose 5-phosphate. Position 18 (Arg-18) interacts with 3-amino-2-oxopropyl phosphate. Catalysis depends on His-43, which acts as the Proton acceptor. Positions 45 and 50 each coordinate 1-deoxy-D-xylulose 5-phosphate. The Proton acceptor role is filled by Glu-70. 1-deoxy-D-xylulose 5-phosphate is bound at residue Thr-100. His-190 (proton donor) is an active-site residue. 3-amino-2-oxopropyl phosphate is bound by residues Gly-191 and 212–213 (GH).

The protein belongs to the PNP synthase family. As to quaternary structure, homooctamer; tetramer of dimers.

The protein resides in the cytoplasm. The catalysed reaction is 3-amino-2-oxopropyl phosphate + 1-deoxy-D-xylulose 5-phosphate = pyridoxine 5'-phosphate + phosphate + 2 H2O + H(+). It functions in the pathway cofactor biosynthesis; pyridoxine 5'-phosphate biosynthesis; pyridoxine 5'-phosphate from D-erythrose 4-phosphate: step 5/5. Catalyzes the complicated ring closure reaction between the two acyclic compounds 1-deoxy-D-xylulose-5-phosphate (DXP) and 3-amino-2-oxopropyl phosphate (1-amino-acetone-3-phosphate or AAP) to form pyridoxine 5'-phosphate (PNP) and inorganic phosphate. This chain is Pyridoxine 5'-phosphate synthase, found in Synechococcus sp. (strain CC9902).